A 702-amino-acid polypeptide reads, in one-letter code: Dissimilatory sulfite reductase MccA (702 aa).

The first 39 residues, 1–39 (MLSGWSVLKGGNMKYWDKALLSLFMCVSTLSIAATHAVA), serve as a signal peptide directing secretion. Heme c-binding residues include cysteine 155, cysteine 158, histidine 159, and histidine 171. Lysine 220 and tyrosine 297 together coordinate substrate. Positions 314, 317, 318, 351, 354, 355, 360, 372, 375, and 376 each coordinate heme c. Residue arginine 378 coordinates substrate. Residue cysteine 411 coordinates Cu(+). Residues histidine 423, cysteine 430, cysteine 433, histidine 434, histidine 437, cysteine 474, cysteine 477, histidine 478, histidine 491, cysteine 496, cysteine 499, and histidine 500 each coordinate heme c. Cysteine 507 contributes to the Cu(+) binding site. Positions 528, 574, 590, 591, and 675 each coordinate heme c.

It belongs to the multiheme cytochrome c family. In terms of assembly, homotrimer. Requires Cu(+) as cofactor. The cofactor is heme c.

It localises to the periplasm. The catalysed reaction is [protein]-disulfide + hydrogen sulfide + 2 A + 3 H2O = [protein]-dithiol + sulfite + 2 AH2 + H(+). The protein operates within sulfur metabolism; sulfite reduction. Respiratory sulfite reductase that catalyzes the reduction of sulfite to sulfide in a single step, consuming six electrons in the process. Required for sulfite respiration under anaerobic growth conditions. Has only marginal activity with nitrite. The protein is Dissimilatory sulfite reductase MccA of Wolinella succinogenes (strain ATCC 29543 / DSM 1740 / CCUG 13145 / JCM 31913 / LMG 7466 / NCTC 11488 / FDC 602W) (Vibrio succinogenes).